Here is a 421-residue protein sequence, read N- to C-terminus: Enolase (421 aa).

Q165 contacts (2R)-2-phosphoglycerate. E207 functions as the Proton donor in the catalytic mechanism. Mg(2+) contacts are provided by D244, E285, and D312. Positions 337, 366, 367, and 388 each coordinate (2R)-2-phosphoglycerate. K337 acts as the Proton acceptor in catalysis.

Belongs to the enolase family. It depends on Mg(2+) as a cofactor.

The protein resides in the cytoplasm. It localises to the secreted. It is found in the cell surface. The catalysed reaction is (2R)-2-phosphoglycerate = phosphoenolpyruvate + H2O. It participates in carbohydrate degradation; glycolysis; pyruvate from D-glyceraldehyde 3-phosphate: step 4/5. Its function is as follows. Catalyzes the reversible conversion of 2-phosphoglycerate (2-PG) into phosphoenolpyruvate (PEP). It is essential for the degradation of carbohydrates via glycolysis. The sequence is that of Enolase from Ehrlichia ruminantium (strain Welgevonden).